The chain runs to 372 residues: tRNA-specific 2-thiouridylase MnmA (372 aa).

ATP is bound by residues G9 to S16 and M35. The segment at N95–D97 is interaction with target base in tRNA. C100 serves as the catalytic Nucleophile. C100 and C201 are joined by a disulfide. G124 contacts ATP. An interaction with tRNA region spans residues K151–Q153. C201 serves as the catalytic Cysteine persulfide intermediate. The interaction with tRNA stretch occupies residues R317 to Y318.

The protein belongs to the MnmA/TRMU family.

It localises to the cytoplasm. It catalyses the reaction S-sulfanyl-L-cysteinyl-[protein] + uridine(34) in tRNA + AH2 + ATP = 2-thiouridine(34) in tRNA + L-cysteinyl-[protein] + A + AMP + diphosphate + H(+). Catalyzes the 2-thiolation of uridine at the wobble position (U34) of tRNA, leading to the formation of s(2)U34. The polypeptide is tRNA-specific 2-thiouridylase MnmA (Herminiimonas arsenicoxydans).